The following is an 86-amino-acid chain: Large ribosomal subunit protein bL31B (86 aa).

This sequence belongs to the bacterial ribosomal protein bL31 family. Type B subfamily. Part of the 50S ribosomal subunit.

This is Large ribosomal subunit protein bL31B from Cupriavidus taiwanensis (strain DSM 17343 / BCRC 17206 / CCUG 44338 / CIP 107171 / LMG 19424 / R1) (Ralstonia taiwanensis (strain LMG 19424)).